Here is a 329-residue protein sequence, read N- to C-terminus: Acetyl-coenzyme A carboxylase carboxyl transferase subunit alpha (329 aa).

Residues 40–294 (QLESLAARRR…RAAIERHLEQ (255 aa)) enclose the CoA carboxyltransferase C-terminal domain.

This sequence belongs to the AccA family. As to quaternary structure, acetyl-CoA carboxylase is a heterohexamer composed of biotin carboxyl carrier protein (AccB), biotin carboxylase (AccC) and two subunits each of ACCase subunit alpha (AccA) and ACCase subunit beta (AccD).

Its subcellular location is the cytoplasm. It carries out the reaction N(6)-carboxybiotinyl-L-lysyl-[protein] + acetyl-CoA = N(6)-biotinyl-L-lysyl-[protein] + malonyl-CoA. It participates in lipid metabolism; malonyl-CoA biosynthesis; malonyl-CoA from acetyl-CoA: step 1/1. Component of the acetyl coenzyme A carboxylase (ACC) complex. First, biotin carboxylase catalyzes the carboxylation of biotin on its carrier protein (BCCP) and then the CO(2) group is transferred by the carboxyltransferase to acetyl-CoA to form malonyl-CoA. The polypeptide is Acetyl-coenzyme A carboxylase carboxyl transferase subunit alpha (Synechococcus sp. (strain CC9605)).